The primary structure comprises 251 residues: Chlorophyll a-b binding protein 4, chloroplastic (251 aa).

Ser-35 bears the Phosphoserine mark. Trp-57 is a chlorophyll b binding site. Residues Phe-77 and Glu-96 each coordinate chlorophyll a. Arg-101 contacts chlorophyll b. The next 2 membrane-spanning stretches (helical) occupy residues 102-122 (WAML…IGII) and 135-155 (YFAS…YVEI). Residues Ser-138, Val-144, Glu-154, and Arg-157 each contribute to the chlorophyll b site. Chlorophyll a-binding residues include Lys-204, Glu-205, Asn-208, Arg-210, Gln-222, and His-237.

The protein belongs to the light-harvesting chlorophyll a/b-binding (LHC) protein family. As to quaternary structure, the LHC complex consists of chlorophyll a-b binding proteins. Red-emitting heterodimer with LHCA1. Binds at least 14 chlorophylls (8 Chl-a and 6 Chl-b) and carotenoids such as lutein and neoxanthin. is required as a cofactor. Photoregulated by reversible phosphorylation of its threonine residues.

It localises to the plastid. It is found in the chloroplast thylakoid membrane. Functionally, the light-harvesting complex (LHC) functions as a light receptor, it captures and delivers excitation energy to photosystems with which it is closely associated. The protein is Chlorophyll a-b binding protein 4, chloroplastic of Arabidopsis thaliana (Mouse-ear cress).